Consider the following 672-residue polypeptide: Transcriptional regulator Kaiso (672 aa).

The segment at 1–103 (MESRKLISAT…RSDLLDELIK (103 aa)) is interaction with NCOR1. Residues 1–136 (MESRKLISAT…SGTAQDGNTE (136 aa)) form a self-association region. A BTB domain is found at 32–94 (CDVTVIVEDR…IYSSKIVRVR (63 aa)). Residues K151 and K153 each participate in a glycyl lysine isopeptide (Lys-Gly) (interchain with G-Cter in SUMO2) cross-link. T251 is subject to Phosphothreonine. An interaction with CBFA2T3 region spans residues 298 to 573 (LPNHMPSSIN…FMSSHIKSVH (276 aa)). The disordered stretch occupies residues 325-354 (KANEEEEEEIIDDDDDTISSSPDSAVSNTS). The segment covering 328–341 (EEEEEEIIDDDDDT) has biased composition (acidic residues). Glycyl lysine isopeptide (Lys-Gly) (interchain with G-Cter in SUMO2) cross-links involve residues K390, K407, K414, K449, K465, K474, and K479. The segment at 454–672 (EGEARLENEI…EFEFIIPESY (219 aa)) is interaction with CTNND1. A Nuclear localization signal motif is present at residues 471 to 480 (MANKRMKVKH). C2H2-type zinc fingers lie at residues 494 to 516 (YICI…FNIH), 522 to 544 (YPCR…EIHH), and 550 to 573 (YQCL…KSVH). The segment at 514 to 638 (NIHSWEKKYP…TTTSTQNKPM (125 aa)) is required for DNA-binding. Residues K539, K570, K582, K611, and K618 each participate in a glycyl lysine isopeptide (Lys-Gly) (interchain with G-Cter in SUMO2) cross-link. A disordered region spans residues 616–635 (GYKVDTGKEPPVGTTTSTQN).

As to quaternary structure, self-associates. Interacts with CTNND2. Interacts with CTNND1, and this interaction inhibits binding to both methylated and non-methylated DNA. Interacts with NCOR1. Interacts with KPNA2/RCH1, which may mediate nuclear import of this protein. Interacts with CBFA2T3. In terms of tissue distribution, expressed in vascular endothelium.

It localises to the nucleus. It is found in the cytoplasm. Its function is as follows. Transcriptional regulator with bimodal DNA-binding specificity. Binds to methylated CpG dinucleotides in the consensus sequence 5'-CGCG-3' and also binds to the non-methylated consensus sequence 5'-CTGCNA-3' also known as the consensus kaiso binding site (KBS). Recruits the N-CoR repressor complex to promote histone deacetylation and the formation of repressive chromatin structures in target gene promoters. May contribute to the repression of target genes of the Wnt signaling pathway. May also activate transcription of a subset of target genes by the recruitment of CTNND2. Represses expression of MMP7 in conjunction with transcriptional corepressors CBFA2T3, CBFA2T2 and RUNX1T1. This is Transcriptional regulator Kaiso (ZBTB33) from Homo sapiens (Human).